Reading from the N-terminus, the 206-residue chain is Charged multivesicular body protein 2a homolog 1 (206 aa).

The segment at 1-32 (MSFFGGNKKTPEQELKDSKRELSKGQREMDRE) is disordered. Basic and acidic residues predominate over residues 9–32 (KTPEQELKDSKRELSKGQREMDRE). 2 coiled-coil regions span residues 12–80 (EQEL…RATK) and 114–148 (NKQT…DMFE).

This sequence belongs to the SNF7 family. Probable core component of the endosomal sorting required for transport complex III (ESCRT-III). ESCRT-III components are thought to multimerize to form a flat lattice on the perimeter membrane of the endosome.

Its subcellular location is the endosome membrane. Functionally, probable core component of the endosomal sorting required for transport complex III (ESCRT-III) which is involved in multivesicular bodies (MVBs) formation and sorting of endosomal cargo proteins into MVBs. MVBs contain intraluminal vesicles (ILVs) that are generated by invagination and scission from the limiting membrane of the endosome and are delivered to lysosomes enabling degradation of membrane proteins. This is Charged multivesicular body protein 2a homolog 1 (chmp2a1) from Dictyostelium discoideum (Social amoeba).